A 310-amino-acid polypeptide reads, in one-letter code: MNRSPGEFQRYAKAFQKQLSKVQQTGGRGQVPSPRGAFAGLGGLLLLGGGALFINNALFNVDGGHRAIVYSRIHGVSSRIFNEGTHFIFPWLDTPIIYDVRAKPRNVASLTGTKDLQMVNITCRVLSRPDVVQLPTIYRTLGQDYDERVLPSIVNEVLKAVVAQFNASQLITQREKVSRLIRENLVRRASKFNILLDDVSITYMTFSPEFTNAVEAKQIAQQDAQRAAFVVDKARQEKQGMVVRAQGEAKSAELIGEAIKKSRDYVELKRLDTARDIAKILASSPNRVILDNEALLLNTVVDARIDGRGK.

Residues 38–58 (FAGLGGLLLLGGGALFINNAL) traverse the membrane as a helical; Signal-anchor for type II membrane protein segment. An interaction with ATG8 region spans residues 130 to 144 (DVVQLPTIYRTLGQD). An AIM motif is present at residues 138–141 (YRTL). A coiled-coil region spans residues 212–253 (NAVEAKQIAQQDAQRAAFVVDKARQEKQGMVVRAQGEAKSAE).

This sequence belongs to the prohibitin family. In terms of assembly, the mitochondrial prohibitin complex consists of two subunits (PHB1 and PHB2). The subunits assemble into a membrane-associated ring-shaped supercomplex of approximately 1 mDa. The mitochondrial prohibitin complex interacts with the m-AAA protease, a heterohexamer composed of YTA12/RCA1 and YTA10/AFG3. The mitochondrial prohibitin complex interacts with ATG8 and the interaction may support mitophagosome assembly. The N-terminus is blocked.

Its subcellular location is the mitochondrion inner membrane. In terms of biological role, prohibitin probably acts as a holdase/unfoldase for the stabilization of newly synthesized mitochondrial proteins. Involved in mitophagy; may act as an adapter for ATG8 that supports mitophagosome assembly. Negatively regulates the proteolytic processing of ATG32 via the i-AAA protease. Acts as a negative regulator of the m-AAA protease. This Saccharomyces cerevisiae (strain ATCC 204508 / S288c) (Baker's yeast) protein is Prohibitin-2 (PHB2).